The primary structure comprises 173 residues: Crossover junction endodeoxyribonuclease RuvC (173 aa).

Residues Asp-8, Glu-67, and Asp-139 contribute to the active site. Residues Asp-8, Glu-67, and Asp-139 each contribute to the Mg(2+) site.

Belongs to the RuvC family. Homodimer which binds Holliday junction (HJ) DNA. The HJ becomes 2-fold symmetrical on binding to RuvC with unstacked arms; it has a different conformation from HJ DNA in complex with RuvA. In the full resolvosome a probable DNA-RuvA(4)-RuvB(12)-RuvC(2) complex forms which resolves the HJ. The cofactor is Mg(2+).

It is found in the cytoplasm. It catalyses the reaction Endonucleolytic cleavage at a junction such as a reciprocal single-stranded crossover between two homologous DNA duplexes (Holliday junction).. In terms of biological role, the RuvA-RuvB-RuvC complex processes Holliday junction (HJ) DNA during genetic recombination and DNA repair. Endonuclease that resolves HJ intermediates. Cleaves cruciform DNA by making single-stranded nicks across the HJ at symmetrical positions within the homologous arms, yielding a 5'-phosphate and a 3'-hydroxyl group; requires a central core of homology in the junction. The consensus cleavage sequence is 5'-(A/T)TT(C/G)-3'. Cleavage occurs on the 3'-side of the TT dinucleotide at the point of strand exchange. HJ branch migration catalyzed by RuvA-RuvB allows RuvC to scan DNA until it finds its consensus sequence, where it cleaves and resolves the cruciform DNA. This is Crossover junction endodeoxyribonuclease RuvC from Salmonella paratyphi C (strain RKS4594).